The chain runs to 220 residues: 7-cyano-7-deazaguanine synthase (220 aa).

Valine 11–methionine 21 serves as a coordination point for ATP. Residues cysteine 186, cysteine 194, cysteine 197, and cysteine 200 each coordinate Zn(2+).

This sequence belongs to the QueC family. The cofactor is Zn(2+).

It carries out the reaction 7-carboxy-7-deazaguanine + NH4(+) + ATP = 7-cyano-7-deazaguanine + ADP + phosphate + H2O + H(+). The protein operates within purine metabolism; 7-cyano-7-deazaguanine biosynthesis. Its function is as follows. Catalyzes the ATP-dependent conversion of 7-carboxy-7-deazaguanine (CDG) to 7-cyano-7-deazaguanine (preQ(0)). The protein is 7-cyano-7-deazaguanine synthase of Porphyromonas gingivalis (strain ATCC BAA-308 / W83).